Here is a 200-residue protein sequence, read N- to C-terminus: Probable GTP-binding protein EngB (200 aa).

Residues 25-199 (SGYEVAFAGR…ISVLDRWYEW (175 aa)) enclose the EngB-type G domain. GTP-binding positions include 33–40 (GRSNAGKS), 60–64 (GRTQL), 78–81 (DLPG), 145–148 (TKAD), and 178–180 (FSS). 2 residues coordinate Mg(2+): Ser-40 and Thr-62.

The protein belongs to the TRAFAC class TrmE-Era-EngA-EngB-Septin-like GTPase superfamily. EngB GTPase family. Mg(2+) is required as a cofactor.

Functionally, necessary for normal cell division and for the maintenance of normal septation. The sequence is that of Probable GTP-binding protein EngB from Legionella pneumophila (strain Paris).